Here is a 361-residue protein sequence, read N- to C-terminus: Histidinol-phosphate aminotransferase (361 aa).

Lysine 219 carries the post-translational modification N6-(pyridoxal phosphate)lysine.

The protein belongs to the class-II pyridoxal-phosphate-dependent aminotransferase family. Histidinol-phosphate aminotransferase subfamily. As to quaternary structure, homodimer. The cofactor is pyridoxal 5'-phosphate.

It catalyses the reaction L-histidinol phosphate + 2-oxoglutarate = 3-(imidazol-4-yl)-2-oxopropyl phosphate + L-glutamate. The protein operates within amino-acid biosynthesis; L-histidine biosynthesis; L-histidine from 5-phospho-alpha-D-ribose 1-diphosphate: step 7/9. This is Histidinol-phosphate aminotransferase from Acinetobacter baumannii (strain ACICU).